Here is a 203-residue protein sequence, read N- to C-terminus: Ribosomal RNA large subunit methyltransferase E (203 aa).

S-adenosyl-L-methionine contacts are provided by G51, W53, D69, D85, and D108. Catalysis depends on K148, which acts as the Proton acceptor.

Belongs to the class I-like SAM-binding methyltransferase superfamily. RNA methyltransferase RlmE family.

It is found in the cytoplasm. It catalyses the reaction uridine(2552) in 23S rRNA + S-adenosyl-L-methionine = 2'-O-methyluridine(2552) in 23S rRNA + S-adenosyl-L-homocysteine + H(+). Functionally, specifically methylates the uridine in position 2552 of 23S rRNA at the 2'-O position of the ribose in the fully assembled 50S ribosomal subunit. This is Ribosomal RNA large subunit methyltransferase E from Methanocorpusculum labreanum (strain ATCC 43576 / DSM 4855 / Z).